The primary structure comprises 145 residues: 3-hydroxyacyl-[acyl-carrier-protein] dehydratase FabZ (145 aa).

His-51 is an active-site residue.

Belongs to the thioester dehydratase family. FabZ subfamily.

It localises to the cytoplasm. The enzyme catalyses a (3R)-hydroxyacyl-[ACP] = a (2E)-enoyl-[ACP] + H2O. In terms of biological role, involved in unsaturated fatty acids biosynthesis. Catalyzes the dehydration of short chain beta-hydroxyacyl-ACPs and long chain saturated and unsaturated beta-hydroxyacyl-ACPs. In Staphylococcus haemolyticus (strain JCSC1435), this protein is 3-hydroxyacyl-[acyl-carrier-protein] dehydratase FabZ.